The chain runs to 1230 residues: Serine/threonine-protein kinase CST20 (1230 aa).

The span at 1-20 shows a compositional bias: polar residues; sequence MSILSENNPTPTSITDPNKS. Disordered regions lie at residues 1 to 384 and 413 to 470; these read MSIL…TAHN and SSLE…HSQE. 2 stretches are compositionally biased toward low complexity: residues 57-70 and 96-125; these read NTTS…SLGS and SGSG…NPES. Residues 150-161 are compositionally biased toward basic and acidic residues; it reads HQGDDSDNEKQY. Composition is skewed to polar residues over residues 175–197, 207–224, and 237–246; these read DSYS…NNVS, TSSL…NENA, and PTSKTSSFHD. The segment covering 248 to 257 has biased composition (low complexity); the sequence is SSVISSSTSV. Composition is skewed to polar residues over residues 262-277 and 311-330; these read SNPT…SYKS and DTLS…TLQG. 2 stretches are compositionally biased toward low complexity: residues 349 to 381 and 439 to 468; these read NTSA…STST and KVRG…NSHS. One can recognise a CRIB domain in the interval 475–488; that stretch reads ISTPFNAKHLAHVG. 2 disordered regions span residues 545 to 831 and 867 to 919; these read FHFD…ALAD and LREK…KQAA. Residues 550–561 are compositionally biased toward polar residues; sequence NKSSSSGWSNEN. A compositionally biased stretch (gly residues) spans 570 to 581; sequence SNSGSGSGGGGA. Positions 604–613 are enriched in polar residues; it reads ITPSQSMPTK. Positions 614–628 are enriched in basic and acidic residues; that stretch reads TESKQSENQHPHEDN. The span at 629–642 shows a compositional bias: polar residues; sequence ATQYTPRTPTSHVQ. Composition is skewed to low complexity over residues 670 to 683, 696 to 710, and 736 to 749; these read PSSQ…SQSD, SPSK…SKSL, and SIPK…SLSS. The segment covering 750 to 761 has biased composition (polar residues); sequence QLRPATNGSTTA. The segment covering 789 to 807 has biased composition (pro residues); sequence APPPPPSAPPAPPVPPAPP. Residues 811–826 are compositionally biased toward polar residues; it reads LSEQTSEIPQQRTAPS. Positions 867–876 are enriched in basic and acidic residues; the sequence is LREKNERQNR. The span at 877–892 shows a compositional bias: polar residues; it reads QQETGQNNADTASGGS. In terms of domain architecture, Protein kinase spans 953–1205; sequence YVDLVKIGQG…ADELLHDNFI (253 aa). Residues 959–967 and Lys983 each bind ATP; that span reads IGQGASGGV. Asp1073 acts as the Proton acceptor in catalysis.

The protein belongs to the protein kinase superfamily. STE Ser/Thr protein kinase family. STE20 subfamily.

It is found in the cytoplasm. The protein localises to the nucleus. It carries out the reaction L-seryl-[protein] + ATP = O-phospho-L-seryl-[protein] + ADP + H(+). The enzyme catalyses L-threonyl-[protein] + ATP = O-phospho-L-threonyl-[protein] + ADP + H(+). Functionally, MAP4K component of the MAPK pathway required for the mating pheromone response, and the regulation of cell polarity and cell cycle. Phosphorylates histone H2B to form H2BS10ph. Required for hyphal formation and virulence. The sequence is that of Serine/threonine-protein kinase CST20 (CST20) from Candida albicans (Yeast).